A 27-amino-acid polypeptide reads, in one-letter code: Fructokinase (27 aa).

It belongs to the ROK (NagC/XylR) family. As to quaternary structure, homodimer. Mg(2+) serves as cofactor.

It catalyses the reaction D-fructose + ATP = D-fructose 6-phosphate + ADP + H(+). Its activity is regulated as follows. Inhibition by zinc ions. This Fusobacterium mortiferum protein is Fructokinase.